The following is a 409-amino-acid chain: Probable type I inositol 1,4,5-trisphosphate 5-phosphatase (409 aa).

This sequence belongs to the inositol 1,4,5-trisphosphate 5-phosphatase type I family.

The enzyme catalyses 1D-myo-inositol 1,4,5-trisphosphate + H2O = 1D-myo-inositol 1,4-bisphosphate + phosphate. It carries out the reaction 1D-myo-inositol 1,3,4,5-tetrakisphosphate + H2O = 1D-myo-inositol 1,3,4-trisphosphate + phosphate. This Caenorhabditis elegans protein is Probable type I inositol 1,4,5-trisphosphate 5-phosphatase (ipp-5).